A 130-amino-acid chain; its full sequence is Small ribosomal subunit protein uS9 (130 aa).

This sequence belongs to the universal ribosomal protein uS9 family.

This chain is Small ribosomal subunit protein uS9, found in Stenotrophomonas maltophilia (strain R551-3).